Here is a 495-residue protein sequence, read N- to C-terminus: Lysine--tRNA ligase (495 aa).

The Mg(2+) site is built by Glu406 and Glu413.

It belongs to the class-II aminoacyl-tRNA synthetase family. As to quaternary structure, homodimer. It depends on Mg(2+) as a cofactor.

It is found in the cytoplasm. It catalyses the reaction tRNA(Lys) + L-lysine + ATP = L-lysyl-tRNA(Lys) + AMP + diphosphate. This is Lysine--tRNA ligase from Leuconostoc mesenteroides subsp. mesenteroides (strain ATCC 8293 / DSM 20343 / BCRC 11652 / CCM 1803 / JCM 6124 / NCDO 523 / NBRC 100496 / NCIMB 8023 / NCTC 12954 / NRRL B-1118 / 37Y).